The following is an 82-amino-acid chain: Small ribosomal subunit protein eS21 (82 aa).

It belongs to the eukaryotic ribosomal protein eS21 family.

In Oryza sativa subsp. japonica (Rice), this protein is Small ribosomal subunit protein eS21 (RPS21).